Here is a 901-residue protein sequence, read N- to C-terminus: HTH-type transcriptional regulator MalT (901 aa).

39–46 (SPAGYGKT) is an ATP binding site. In terms of domain architecture, HTH luxR-type spans 829–894 (ELIRTSPLTQ…DAVQHAQQLL (66 aa)). Residues 853–872 (NEQIAGELAVAATTIKTHIR) constitute a DNA-binding region (H-T-H motif).

Belongs to the MalT family. Monomer in solution. Oligomerizes to an active state in the presence of the positive effectors ATP and maltotriose.

With respect to regulation, activated by ATP and maltotriose, which are both required for DNA binding. Functionally, positively regulates the transcription of the maltose regulon whose gene products are responsible for uptake and catabolism of malto-oligosaccharides. Specifically binds to the promoter region of its target genes, recognizing a short DNA motif called the MalT box. This Salmonella agona (strain SL483) protein is HTH-type transcriptional regulator MalT.